Reading from the N-terminus, the 297-residue chain is 4-diphosphocytidyl-2-C-methyl-D-erythritol kinase (297 aa).

Lysine 10 is a catalytic residue. Residue 95–105 coordinates ATP; that stretch reads PVAGGMAGGSA. The active site involves aspartate 137.

It belongs to the GHMP kinase family. IspE subfamily.

It carries out the reaction 4-CDP-2-C-methyl-D-erythritol + ATP = 4-CDP-2-C-methyl-D-erythritol 2-phosphate + ADP + H(+). The protein operates within isoprenoid biosynthesis; isopentenyl diphosphate biosynthesis via DXP pathway; isopentenyl diphosphate from 1-deoxy-D-xylulose 5-phosphate: step 3/6. In terms of biological role, catalyzes the phosphorylation of the position 2 hydroxy group of 4-diphosphocytidyl-2C-methyl-D-erythritol. The sequence is that of 4-diphosphocytidyl-2-C-methyl-D-erythritol kinase from Streptomyces avermitilis (strain ATCC 31267 / DSM 46492 / JCM 5070 / NBRC 14893 / NCIMB 12804 / NRRL 8165 / MA-4680).